The following is a 199-amino-acid chain: Adenosylcobinamide-GDP ribazoletransferase (199 aa).

Helical transmembrane passes span 2 to 22 (LAGG…VFAV) and 61 to 81 (IAAV…VAAL).

This sequence belongs to the CobS family. The cofactor is Mg(2+).

It is found in the cell membrane. It catalyses the reaction alpha-ribazole + adenosylcob(III)inamide-GDP = adenosylcob(III)alamin + GMP + H(+). The catalysed reaction is alpha-ribazole 5'-phosphate + adenosylcob(III)inamide-GDP = adenosylcob(III)alamin 5'-phosphate + GMP + H(+). It participates in cofactor biosynthesis; adenosylcobalamin biosynthesis; adenosylcobalamin from cob(II)yrinate a,c-diamide: step 7/7. Joins adenosylcobinamide-GDP and alpha-ribazole to generate adenosylcobalamin (Ado-cobalamin). Also synthesizes adenosylcobalamin 5'-phosphate from adenosylcobinamide-GDP and alpha-ribazole 5'-phosphate. The protein is Adenosylcobinamide-GDP ribazoletransferase of Halobacterium salinarum (strain ATCC 700922 / JCM 11081 / NRC-1) (Halobacterium halobium).